The primary structure comprises 476 residues: Bifunctional protein HldE (476 aa).

Residues Met1–Ser319 form a ribokinase region. Asn195–Glu198 contacts ATP. Residue Asp264 is part of the active site. Positions Met345 to Gln476 are cytidylyltransferase.

The protein in the N-terminal section; belongs to the carbohydrate kinase PfkB family. In the C-terminal section; belongs to the cytidylyltransferase family. In terms of assembly, homodimer.

It carries out the reaction D-glycero-beta-D-manno-heptose 7-phosphate + ATP = D-glycero-beta-D-manno-heptose 1,7-bisphosphate + ADP + H(+). The enzyme catalyses D-glycero-beta-D-manno-heptose 1-phosphate + ATP + H(+) = ADP-D-glycero-beta-D-manno-heptose + diphosphate. Its pathway is nucleotide-sugar biosynthesis; ADP-L-glycero-beta-D-manno-heptose biosynthesis; ADP-L-glycero-beta-D-manno-heptose from D-glycero-beta-D-manno-heptose 7-phosphate: step 1/4. It functions in the pathway nucleotide-sugar biosynthesis; ADP-L-glycero-beta-D-manno-heptose biosynthesis; ADP-L-glycero-beta-D-manno-heptose from D-glycero-beta-D-manno-heptose 7-phosphate: step 3/4. Functionally, catalyzes the phosphorylation of D-glycero-D-manno-heptose 7-phosphate at the C-1 position to selectively form D-glycero-beta-D-manno-heptose-1,7-bisphosphate. In terms of biological role, catalyzes the ADP transfer from ATP to D-glycero-beta-D-manno-heptose 1-phosphate, yielding ADP-D-glycero-beta-D-manno-heptose. This is Bifunctional protein HldE from Shewanella putrefaciens (strain CN-32 / ATCC BAA-453).